A 250-amino-acid polypeptide reads, in one-letter code: 2,3-bisphosphoglycerate-dependent phosphoglycerate mutase (250 aa).

Substrate is bound by residues 10-17 (RHGESQWN), 23-24 (TG), Arg62, 89-92 (ERHY), Lys100, 116-117 (RR), and 185-186 (GN). The active-site Tele-phosphohistidine intermediate is His11. The active-site Proton donor/acceptor is Glu89.

This sequence belongs to the phosphoglycerate mutase family. BPG-dependent PGAM subfamily. As to quaternary structure, homodimer.

It catalyses the reaction (2R)-2-phosphoglycerate = (2R)-3-phosphoglycerate. The protein operates within carbohydrate degradation; glycolysis; pyruvate from D-glyceraldehyde 3-phosphate: step 3/5. Catalyzes the interconversion of 2-phosphoglycerate and 3-phosphoglycerate. This is 2,3-bisphosphoglycerate-dependent phosphoglycerate mutase from Klebsiella pneumoniae (strain 342).